A 451-amino-acid polypeptide reads, in one-letter code: Tubulin alpha-1 chain (451 aa).

Q11 is a binding site for GTP. Residue K40 is modified to N6-acetyllysine. E71, G144, T145, T179, N206, and N228 together coordinate GTP. E71 is a binding site for Mg(2+). E254 is a catalytic residue.

This sequence belongs to the tubulin family. Dimer of alpha and beta chains. A typical microtubule is a hollow water-filled tube with an outer diameter of 25 nm and an inner diameter of 15 nM. Alpha-beta heterodimers associate head-to-tail to form protofilaments running lengthwise along the microtubule wall with the beta-tubulin subunit facing the microtubule plus end conferring a structural polarity. Microtubules usually have 13 protofilaments but different protofilament numbers can be found in some organisms and specialized cells. Requires Mg(2+) as cofactor. Undergoes a tyrosination/detyrosination cycle, the cyclic removal and re-addition of a C-terminal tyrosine residue by the enzymes tubulin tyrosine carboxypeptidase (TTCP) and tubulin tyrosine ligase (TTL), respectively. Post-translationally, acetylation of alpha chains at Lys-40 stabilizes microtubules and affects affinity and processivity of microtubule motors. This modification has a role in multiple cellular functions, ranging from cell motility, cell cycle progression or cell differentiation to intracellular trafficking and signaling.

The protein resides in the cytoplasm. Its subcellular location is the cytoskeleton. It carries out the reaction GTP + H2O = GDP + phosphate + H(+). Its function is as follows. Tubulin is the major constituent of microtubules, a cylinder consisting of laterally associated linear protofilaments composed of alpha- and beta-tubulin heterodimers. Microtubules grow by the addition of GTP-tubulin dimers to the microtubule end, where a stabilizing cap forms. Below the cap, tubulin dimers are in GDP-bound state, owing to GTPase activity of alpha-tubulin. This chain is Tubulin alpha-1 chain (TUBA1), found in Chlamydomonas reinhardtii (Chlamydomonas smithii).